The sequence spans 798 residues: Probable DEAD-box ATP-dependent RNA helicase 48 (798 aa).

Disordered regions lie at residues 76–100 (KMWGNPDSGEKTAKSKQSHGPMSPK), 117–148 (DFWNENDGPVKKSDQGSRSGSDSIDSTSNSPI), and 236–257 (FRKNDSSTEEDSDEEGDEGKMI). The segment covering 132 to 148 (GSRSGSDSIDSTSNSPI) has biased composition (low complexity). Residues 242-252 (STEEDSDEEGD) are compositionally biased toward acidic residues. The short motif at 328–356 (KRFDESCISPLTLKALSASGILKMTRVQD) is the Q motif element. One can recognise a Helicase ATP-binding domain in the interval 359–543 (LSECLDGKDA…QLVLKRDHSY (185 aa)). Position 372 to 379 (372 to 379 (AKTGTGKS)) interacts with ATP. Residues 491-494 (DEAD) carry the DEAD box motif. One can recognise a Helicase C-terminal domain in the interval 577-726 (LLKEHINNTP…SIVKHQVDQS (150 aa)).

This sequence belongs to the DEAD box helicase family.

It carries out the reaction ATP + H2O = ADP + phosphate + H(+). The chain is Probable DEAD-box ATP-dependent RNA helicase 48 (RH48) from Arabidopsis thaliana (Mouse-ear cress).